The chain runs to 450 residues: UDP-N-acetylmuramoylalanine--D-glutamate ligase (450 aa).

An ATP-binding site is contributed by 111 to 117 (GTNGKST).

This sequence belongs to the MurCDEF family.

It is found in the cytoplasm. It carries out the reaction UDP-N-acetyl-alpha-D-muramoyl-L-alanine + D-glutamate + ATP = UDP-N-acetyl-alpha-D-muramoyl-L-alanyl-D-glutamate + ADP + phosphate + H(+). Its pathway is cell wall biogenesis; peptidoglycan biosynthesis. Functionally, cell wall formation. Catalyzes the addition of glutamate to the nucleotide precursor UDP-N-acetylmuramoyl-L-alanine (UMA). The protein is UDP-N-acetylmuramoylalanine--D-glutamate ligase of Rickettsia bellii (strain RML369-C).